A 968-amino-acid chain; its full sequence is Glycine dehydrogenase (decarboxylating) (968 aa).

At K712 the chain carries N6-(pyridoxal phosphate)lysine.

It belongs to the GcvP family. As to quaternary structure, the glycine cleavage system is composed of four proteins: P, T, L and H. Requires pyridoxal 5'-phosphate as cofactor.

It carries out the reaction N(6)-[(R)-lipoyl]-L-lysyl-[glycine-cleavage complex H protein] + glycine + H(+) = N(6)-[(R)-S(8)-aminomethyldihydrolipoyl]-L-lysyl-[glycine-cleavage complex H protein] + CO2. Functionally, the glycine cleavage system catalyzes the degradation of glycine. The P protein binds the alpha-amino group of glycine through its pyridoxal phosphate cofactor; CO(2) is released and the remaining methylamine moiety is then transferred to the lipoamide cofactor of the H protein. The sequence is that of Glycine dehydrogenase (decarboxylating) from Prochlorococcus marinus (strain NATL2A).